A 69-amino-acid polypeptide reads, in one-letter code: Sec-independent protein translocase protein TatA (69 aa).

The helical transmembrane segment at M1–G21 threads the bilayer. The interval E49–E69 is disordered.

This sequence belongs to the TatA/E family. As to quaternary structure, forms a complex with TatC.

The protein localises to the cell inner membrane. Functionally, part of the twin-arginine translocation (Tat) system that transports large folded proteins containing a characteristic twin-arginine motif in their signal peptide across membranes. TatA could form the protein-conducting channel of the Tat system. The sequence is that of Sec-independent protein translocase protein TatA from Chlorobium luteolum (strain DSM 273 / BCRC 81028 / 2530) (Pelodictyon luteolum).